We begin with the raw amino-acid sequence, 549 residues long: Glucose-6-phosphate isomerase (549 aa).

The active-site Proton donor is Glu353. Active-site residues include His384 and Lys510.

Belongs to the GPI family.

It localises to the cytoplasm. It carries out the reaction alpha-D-glucose 6-phosphate = beta-D-fructose 6-phosphate. It participates in carbohydrate biosynthesis; gluconeogenesis. Its pathway is carbohydrate degradation; glycolysis; D-glyceraldehyde 3-phosphate and glycerone phosphate from D-glucose: step 2/4. Functionally, catalyzes the reversible isomerization of glucose-6-phosphate to fructose-6-phosphate. The protein is Glucose-6-phosphate isomerase of Mycolicibacterium smegmatis (Mycobacterium smegmatis).